Here is a 406-residue protein sequence, read N- to C-terminus: Tyrosine--tRNA ligase (406 aa).

The 'HIGH' region motif lies at 48–57 (PSRPDLHLGH). The 'KMSKS' region signature appears at 232-236 (KMSKS). Lysine 235 is a binding site for ATP. Positions 339–401 (MPVVELLMAL…GKRKFFKVAR (63 aa)) constitute an S4 RNA-binding domain.

Belongs to the class-I aminoacyl-tRNA synthetase family. TyrS type 2 subfamily. In terms of assembly, homodimer.

Its subcellular location is the cytoplasm. The enzyme catalyses tRNA(Tyr) + L-tyrosine + ATP = L-tyrosyl-tRNA(Tyr) + AMP + diphosphate + H(+). In terms of biological role, catalyzes the attachment of tyrosine to tRNA(Tyr) in a two-step reaction: tyrosine is first activated by ATP to form Tyr-AMP and then transferred to the acceptor end of tRNA(Tyr). This Chlorobaculum tepidum (strain ATCC 49652 / DSM 12025 / NBRC 103806 / TLS) (Chlorobium tepidum) protein is Tyrosine--tRNA ligase.